Consider the following 205-residue polypeptide: Thymidine kinase (205 aa).

ATP is bound by residues 9–16 (SAMNAGKS) and 87–90 (DECQ). Glutamate 88 (proton acceptor) is an active-site residue. Positions 145, 147, 182, and 185 each coordinate Zn(2+).

It belongs to the thymidine kinase family. In terms of assembly, homotetramer.

Its subcellular location is the cytoplasm. The catalysed reaction is thymidine + ATP = dTMP + ADP + H(+). Its activity is regulated as follows. Allosteric enzyme which is feedback inhibited by dTTP and activated by a number of dNDP and dNTP. Functionally, phosphorylates both thymidine and deoxyuridine. The polypeptide is Thymidine kinase (Escherichia coli (strain K12)).